The chain runs to 1202 residues: Phospholipid-transporting ATPase 10 (1202 aa).

Over 1-73 (MAGPSRRRRR…STKYTVASFF (73 aa)) the chain is Cytoplasmic. The chain crosses the membrane as a helical span at residues 74 to 95 (PKSLFEQFRRVANFYFLVTGIL). Topologically, residues 96-99 (SLTD) are extracellular. A helical transmembrane segment spans residues 100 to 122 (LSPYGAVSALLPLALVISATMVK). The Cytoplasmic segment spans residues 123–305 (EGIEDWRRKQ…SRIERTMDKI (183 aa)). A helical membrane pass occupies residues 306–327 (IYLMFGLVFLMSFVGSIIFGVE). The Extracellular portion of the chain corresponds to 328-364 (TREDKVKNGRTERWYLKPDDADIFFDPERAPMAAIYH). The helical transmembrane segment at 365–382 (FFTATMLYSYFIPISLYV) threads the bilayer. Topologically, residues 383 to 920 (SIEIVKVLQS…HGHWCYSRIA (538 aa)) are cytoplasmic. The 4-aspartylphosphate intermediate role is filled by Asp-430. Asp-865 and Asp-869 together coordinate Mg(2+). The chain crosses the membrane as a helical span at residues 921 to 940 (SMICYFFYKNITFGVTVFLY). The Extracellular portion of the chain corresponds to 941–954 (EAYTSFSGQPAYND). A helical membrane pass occupies residues 955–974 (WFLSLFNVFFSSLPVIALGV). The Cytoplasmic portion of the chain corresponds to 975 to 1004 (FDQDVSARFCYKFPLLYQEGVQNILFSWKR). The helical transmembrane segment at 1005–1027 (IIGWMFNGFISALAIFFLCKESL) threads the bilayer. The Extracellular portion of the chain corresponds to 1028-1040 (KHQLFDPDGKTAG). Residues 1041–1063 (REILGGTMYTCVVWVVNLQMALS) traverse the membrane as a helical segment. Topologically, residues 1064 to 1069 (ISYFTW) are cytoplasmic. A helical transmembrane segment spans residues 1070 to 1090 (VQHIVIWGSIAFWYIFLMIYG). The Extracellular segment spans residues 1091-1107 (AMTPSFSTDAYMVFLEA). The helical transmembrane segment at 1108 to 1132 (LAPAPSYWLTTLFVMIFALIPYFVY) threads the bilayer. At 1133–1202 (KSVQMRFFPK…DQIYKDLVGV (70 aa)) the chain is on the cytoplasmic side.

It belongs to the cation transport ATPase (P-type) (TC 3.A.3) family. Type IV subfamily.

It localises to the cell membrane. The catalysed reaction is ATP + H2O + phospholipidSide 1 = ADP + phosphate + phospholipidSide 2.. Its function is as follows. Involved in transport of phospholipids. The chain is Phospholipid-transporting ATPase 10 from Arabidopsis thaliana (Mouse-ear cress).